We begin with the raw amino-acid sequence, 1189 residues long: Pyruvate carboxylase (1189 aa).

Positions 21 to 473 constitute a Biotin carboxylation domain; the sequence is TMNKILVANR…WTTFIDDTPE (453 aa). ATP contacts are provided by Lys139, Glu223, and His258. The ATP-grasp domain maps to 143–340; that stretch reads RNLAYAANVP…IVAAQIQIAA (198 aa). Arg315 is an active-site residue. One can recognise a Pyruvate carboxyltransferase domain in the interval 559–826; that stretch reads LMIMDTTWRD…ETGIPEANAR (268 aa). Residues 567–571 and Arg640 each bind substrate; that span reads RDAHQ. Asp568 is an a divalent metal cation binding site. Lys736, His766, and His768 together coordinate a divalent metal cation. N6-carboxylysine is present on Lys736. Thr900 provides a ligand contact to substrate. Residues 1099–1174 enclose the Biotinyl-binding domain; the sequence is KADAHNPNEI…DASDLIPKSS (76 aa). Lys1140 carries the N6-biotinyllysine modification.

It depends on biotin as a cofactor. Zn(2+) serves as cofactor.

The protein localises to the cytoplasm. It catalyses the reaction hydrogencarbonate + pyruvate + ATP = oxaloacetate + ADP + phosphate + H(+). The protein operates within carbohydrate biosynthesis; gluconeogenesis. Pyruvate carboxylase catalyzes a 2-step reaction, involving the ATP-dependent carboxylation of the covalently attached biotin in the first step and the transfer of the carboxyl group to pyruvate in the second. The chain is Pyruvate carboxylase (PYC1) from Komagataella pastoris (Yeast).